The chain runs to 295 residues: UDP-N-acetylenolpyruvoylglucosamine reductase (295 aa).

The 166-residue stretch at Gln23–Gly188 folds into the FAD-binding PCMH-type domain. Residue Arg167 is part of the active site. Residue Ser217 is the Proton donor of the active site. Glu287 is an active-site residue.

It belongs to the MurB family. It depends on FAD as a cofactor.

The protein resides in the cytoplasm. It catalyses the reaction UDP-N-acetyl-alpha-D-muramate + NADP(+) = UDP-N-acetyl-3-O-(1-carboxyvinyl)-alpha-D-glucosamine + NADPH + H(+). The protein operates within cell wall biogenesis; peptidoglycan biosynthesis. Functionally, cell wall formation. The sequence is that of UDP-N-acetylenolpyruvoylglucosamine reductase from Streptococcus equi subsp. equi (strain 4047).